A 439-amino-acid chain; its full sequence is Eukaryotic translation initiation factor 2 subunit gamma (439 aa).

Residues 11–215 (QATLNIGTIG…FIVNYIPEPV (205 aa)) form the tr-type G domain. The tract at residues 20 to 27 (GHVAHGKS) is G1. 23-28 (AHGKST) serves as a coordination point for GTP. Positions 48–52 (NITIK) are G2. The G3 stretch occupies residues 103-106 (DCPG). GTP is bound by residues 159-162 (NKID) and 193-195 (AAQ). Residues 159-162 (NKID) are G4. The interval 193–195 (AAQ) is G5. The interacts with CDC123 stretch occupies residues 415–427 (GEIKDGTCIEPEY).

The protein belongs to the TRAFAC class translation factor GTPase superfamily. Classic translation factor GTPase family. EIF2G subfamily. As to quaternary structure, eukaryotic translation initiation factor 2 eIF2 is a heterotrimeric complex composed of an alpha, a beta and a gamma subunit. The factors eIF-1, eIF-2, eIF-3, TIF5/eIF-5 and methionyl-tRNAi form a multifactor complex (MFC) that may bind to the 40S ribosome.

Its subcellular location is the cytoplasm. It is found in the cytosol. It carries out the reaction GTP + H2O = GDP + phosphate + H(+). Functionally, as a subunit of eukaryotic initiation factor 2 eIF2, involved in the early steps of protein synthesis. In the presence of GTP, eIF-2 forms a ternary complex with initiator tRNA Met-tRNAi and then recruits the 40S ribosomal complex and initiation factors eIF-1, eIF-1A and eIF-3 to form the 43S pre-initiation complex (43S PIC), a step that determines the rate of protein translation. The 43S PIC binds to mRNA and scans downstream to the initiation codon, where it forms a 48S initiation complex by codon-anticodon base pairing. This leads to the displacement of eIF-1 to allow GTPase-activating protein (GAP) eIF-5-mediated hydrolysis of eIF2-bound GTP. Hydrolysis of GTP and release of Pi, which makes GTP hydrolysis irreversible, causes the release of the eIF-2-GDP binary complex from the 40S subunit, an event that is essential for the subsequent joining of the 60S ribosomal subunit to form an elongation-competent 80S ribosome. In order for eIF-2 to recycle and catalyze another round of initiation, the GDP bound to eIF-2 must be exchanged with GTP by way of a reaction catalyzed by GDP-GTP exchange factor (GEF) eIF-2B. The protein is Eukaryotic translation initiation factor 2 subunit gamma of Encephalitozoon cuniculi (strain GB-M1) (Microsporidian parasite).